The primary structure comprises 526 residues: Transcription factor MYC1 (526 aa).

The interval 330-351 is disordered; that stretch reads MFPSQNSGLNQDDPSDRRKENE. Residues 332-341 show a composition bias toward polar residues; that stretch reads PSQNSGLNQD. The bHLH domain occupies 333-382; it reads SQNSGLNQDDPSDRRKENEKFSVLRTMVPTVNEVDKESILNNTIKYLQEL.

In terms of assembly, homodimer. Interacts with MYB75/PAP1, MYB90/PAP2, MYB4, MYB5, MYB6, MYB23, MYB82, MYB113, MYB114, TT2, MYB0/GL1, and MYB66/WER. As to expression, mostly expressed in developing seeds. Also detected in stems and leaves.

The protein localises to the nucleus. Functionally, trancsription activator, when associated with MYB75/PAP1 or MYB90/PAP2. In Arabidopsis thaliana (Mouse-ear cress), this protein is Transcription factor MYC1 (BHLH12).